We begin with the raw amino-acid sequence, 34 residues long: DDIT3 upstream open reading frame protein (34 aa).

In terms of assembly, interacts with DDIT3 (isoform 1).

It localises to the nucleus. The protein localises to the cytoplasm. Product of the upstream open reading frame (uORF) of DDIT3/CHOP that is specifically produced in absence of stress, thereby preventing translation of downstream stress effector DDIT3/CHOP. This Mus musculus (Mouse) protein is DDIT3 upstream open reading frame protein.